A 392-amino-acid chain; its full sequence is 8-amino-7-oxononanoate synthase (392 aa).

R26 contributes to the substrate binding site. 112 to 113 (GF) is a binding site for pyridoxal 5'-phosphate. H137 lines the substrate pocket. Pyridoxal 5'-phosphate is bound by residues S187, H215, and T241. An N6-(pyridoxal phosphate)lysine modification is found at K244. A substrate-binding site is contributed by T357.

It belongs to the class-II pyridoxal-phosphate-dependent aminotransferase family. BioF subfamily. As to quaternary structure, homodimer. It depends on pyridoxal 5'-phosphate as a cofactor.

It catalyses the reaction 6-carboxyhexanoyl-[ACP] + L-alanine + H(+) = (8S)-8-amino-7-oxononanoate + holo-[ACP] + CO2. It functions in the pathway cofactor biosynthesis; biotin biosynthesis. Catalyzes the decarboxylative condensation of pimeloyl-[acyl-carrier protein] and L-alanine to produce 8-amino-7-oxononanoate (AON), [acyl-carrier protein], and carbon dioxide. The protein is 8-amino-7-oxononanoate synthase of Photobacterium profundum (strain SS9).